Here is a 277-residue protein sequence, read N- to C-terminus: F420-dependent methylenetetrahydromethanopterin dehydrogenase (277 aa).

The protein belongs to the MTD family.

The catalysed reaction is 5,10-methylenetetrahydromethanopterin + oxidized coenzyme F420-(gamma-L-Glu)(n) + 2 H(+) = 5,10-methenyl-5,6,7,8-tetrahydromethanopterin + reduced coenzyme F420-(gamma-L-Glu)(n). The protein operates within one-carbon metabolism; methanogenesis from CO(2); 5,10-methylene-5,6,7,8-tetrahydromethanopterin from 5,10-methenyl-5,6,7,8-tetrahydromethanopterin (coenzyme F420 route): step 1/1. Its function is as follows. Catalyzes the reversible reduction of methenyl-H(4)MPT(+) to methylene-H(4)MPT. The chain is F420-dependent methylenetetrahydromethanopterin dehydrogenase from Methanococcus maripaludis (strain DSM 14266 / JCM 13030 / NBRC 101832 / S2 / LL).